A 106-amino-acid chain; its full sequence is NADH-quinone oxidoreductase subunit K (106 aa).

A run of 3 helical transmembrane segments spans residues 10-30, 34-54, and 67-87; these read VTYI…GVLI, IVII…VFVT, and IVFF…ALVI.

It belongs to the complex I subunit 4L family. NDH-1 is composed of 14 different subunits. Subunits NuoA, H, J, K, L, M, N constitute the membrane sector of the complex.

It is found in the cell inner membrane. The enzyme catalyses a quinone + NADH + 5 H(+)(in) = a quinol + NAD(+) + 4 H(+)(out). Functionally, NDH-1 shuttles electrons from NADH, via FMN and iron-sulfur (Fe-S) centers, to quinones in the respiratory chain. The immediate electron acceptor for the enzyme in this species is believed to be ubiquinone. Couples the redox reaction to proton translocation (for every two electrons transferred, four hydrogen ions are translocated across the cytoplasmic membrane), and thus conserves the redox energy in a proton gradient. This Leptospira biflexa serovar Patoc (strain Patoc 1 / Ames) protein is NADH-quinone oxidoreductase subunit K.